The sequence spans 101 residues: Small ribosomal subunit protein uS14 (101 aa).

Belongs to the universal ribosomal protein uS14 family. In terms of assembly, part of the 30S ribosomal subunit. Contacts proteins S3 and S10.

Binds 16S rRNA, required for the assembly of 30S particles and may also be responsible for determining the conformation of the 16S rRNA at the A site. The polypeptide is Small ribosomal subunit protein uS14 (Actinobacillus succinogenes (strain ATCC 55618 / DSM 22257 / CCUG 43843 / 130Z)).